The sequence spans 594 residues: Chondroitin sulfate proteoglycan 5 (594 aa).

Residues Met-1 to Ala-12 are compositionally biased toward polar residues. Positions Met-1–Thr-18 are cleaved as a signal peptide. 2 disordered regions span residues Met-1–Leu-325 and Thr-343–Arg-418. Residues Ala-19 to Cys-481 are Extracellular-facing. N-linked (GlcNAc...) asparagine glycosylation is found at Asn-26 and Asn-44. The segment covering Ser-140 to Pro-181 has biased composition (low complexity). 2 stretches are compositionally biased toward pro residues: residues Ser-182–Asn-195 and Ile-219–Gly-229. Over residues Pro-248–Arg-259 the composition is skewed to low complexity. Residues Gly-298–Gly-310 show a composition bias toward gly residues. Residues Ala-338–Gly-377 form an interaction with TNC and TNR region. Over residues Glu-349–Glu-375 the composition is skewed to acidic residues. Residues Asn-413 and Asn-425 are each glycosylated (N-linked (GlcNAc...) asparagine). The region spanning Arg-429 to Glu-471 is the EGF-like domain. 3 disulfide bridges follow: Cys-432/Cys-445, Cys-439/Cys-455, and Cys-457/Cys-470. Residues Val-482 to Ala-502 traverse the membrane as a helical segment. Over Lys-503 to Gly-594 the chain is Cytoplasmic. Positions Thr-535–Gly-594 are disordered. The segment covering His-541–Glu-564 has biased composition (basic and acidic residues).

Binds TNC and TNR. The 80 kDa form but not the 140 kDa form can bind TNC and TNR when expressed at the cell surface. Post-translationally, different forms exist: the 140 kDa form (also reported as 130 kDa), which probably consists of the entire protein, and the 38 and 80 kDa forms, which are probably cleaved in their N-terminus. Increase in synaptic activity, results in shedding of the extracellular domain and expression at the cell surface of a 38 kDa form. A form of 200 kDa has also been reported, which is probably hyperglycosylated. In terms of processing, N-glycosylated. O-glycosylated; contains chondroitin sulfate glycans. Part-time proteoglycan, the 200 kDa form is the only one containing chondroitin sulfate glycans. In terms of tissue distribution, expressed in astroglial and neuronal surfaces in different parts of the embryonic brain. Expressed in adult brain and retina (at protein level).

It is found in the cell membrane. In terms of biological role, may function as a growth and differentiation factor involved in neuritogenesis and more particularly in neurite extension. This is Chondroitin sulfate proteoglycan 5 (CSPG5) from Gallus gallus (Chicken).